The chain runs to 48 residues: Large ribosomal subunit protein bL32 (48 aa).

This sequence belongs to the bacterial ribosomal protein bL32 family.

The protein is Large ribosomal subunit protein bL32 of Helicobacter pylori (strain P12).